The following is a 345-amino-acid chain: NADH-quinone oxidoreductase subunit H 1 (345 aa).

Helical transmembrane passes span 11-31 (IILTIAAQGLLVIAFVMISLL), 50-70 (PNVVGAFGLLQTVADAAKYIF), 84-104 (FFLAPLISFVLAVLAWAVIPF), 115-135 (VAILFVFAASSLEVYGVIMGG), 161-181 (LGLIIIGIIISTGSMNLSHIV), 187-207 (AFGLFNWYWLPHLPMVALFFI), 248-268 (YIAIFLMCALMSLLFFGGWLS), 277-297 (VFWMVAKMAFFFFLFAMVKAI), and 309-329 (IGWKVFLPFSLGWVVLVAFLA).

Belongs to the complex I subunit 1 family. As to quaternary structure, NDH-1 is composed of 14 different subunits. Subunits NuoA, H, J, K, L, M, N constitute the membrane sector of the complex.

Its subcellular location is the cell inner membrane. It carries out the reaction a quinone + NADH + 5 H(+)(in) = a quinol + NAD(+) + 4 H(+)(out). Functionally, NDH-1 shuttles electrons from NADH, via FMN and iron-sulfur (Fe-S) centers, to quinones in the respiratory chain. The immediate electron acceptor for the enzyme in this species is believed to be ubiquinone. Couples the redox reaction to proton translocation (for every two electrons transferred, four hydrogen ions are translocated across the cytoplasmic membrane), and thus conserves the redox energy in a proton gradient. This subunit may bind ubiquinone. This chain is NADH-quinone oxidoreductase subunit H 1, found in Cereibacter sphaeroides (strain ATCC 17023 / DSM 158 / JCM 6121 / CCUG 31486 / LMG 2827 / NBRC 12203 / NCIMB 8253 / ATH 2.4.1.) (Rhodobacter sphaeroides).